The primary structure comprises 1011 residues: Protein translocase subunit SecA (1011 aa).

Residues Gln87, 105-109 (GEGKT), and Asp500 contribute to the ATP site. The disordered stretch occupies residues 969 to 1011 (SLPLGANPAPARPQPAVMQEQECPCGSGKPFNKCHGGEDEATA). Cys991, Cys993, Cys1002, and His1003 together coordinate Zn(2+).

Belongs to the SecA family. As to quaternary structure, monomer and homodimer. Part of the essential Sec protein translocation apparatus which comprises SecA, SecYEG and auxiliary proteins SecDF-YajC and YidC. Zn(2+) is required as a cofactor.

Its subcellular location is the cell inner membrane. It localises to the cytoplasm. It catalyses the reaction ATP + H2O + cellular proteinSide 1 = ADP + phosphate + cellular proteinSide 2.. Functionally, part of the Sec protein translocase complex. Interacts with the SecYEG preprotein conducting channel. Has a central role in coupling the hydrolysis of ATP to the transfer of proteins into and across the cell membrane, serving as an ATP-driven molecular motor driving the stepwise translocation of polypeptide chains across the membrane. This is Protein translocase subunit SecA from Sorangium cellulosum (strain So ce56) (Polyangium cellulosum (strain So ce56)).